A 211-amino-acid chain; its full sequence is Ribonuclease HII (211 aa).

Residues 1–205 (MRFGVDEAGK…CDDVLAAASQ (205 aa)) enclose the RNase H type-2 domain. 3 residues coordinate a divalent metal cation: aspartate 6, glutamate 7, and aspartate 100.

This sequence belongs to the RNase HII family. The cofactor is Mn(2+). Mg(2+) is required as a cofactor.

It localises to the cytoplasm. It catalyses the reaction Endonucleolytic cleavage to 5'-phosphomonoester.. Endonuclease that specifically degrades the RNA of RNA-DNA hybrids. The sequence is that of Ribonuclease HII from Haloarcula marismortui (strain ATCC 43049 / DSM 3752 / JCM 8966 / VKM B-1809) (Halobacterium marismortui).